We begin with the raw amino-acid sequence, 214 residues long: MEAPEWLDNAVDLGTSIMAVEYDGGVIMGADSRTTTGAYIANRVTNKITPIHERIYCCRSGSAADTQAISDYVRYYLEMHTSELCDEPDVKTAASLFQLLCYSNKNNLMAGIIVAGWDKHQGGSVYNISLGGSMVKQPFAIGGSGSTYIYGYCDSKFKPKMTKDECIEFVQNSLALAMFRDGSSGGVIRLCIIDKNGVERKMIPGNNLPRFWEG.

Positions 1–14 (MEAPEWLDNAVDLG) are cleaved as a propeptide — removed in mature form. Residue threonine 15 is the Nucleophile of the active site.

It belongs to the peptidase T1B family. In terms of assembly, the 26S proteasome consists of a 20S proteasome core and two 19S regulatory subunits. The 20S proteasome core is composed of 28 subunits that are arranged in four stacked rings, resulting in a barrel-shaped structure. The two end rings are each formed by seven alpha subunits, and the two central rings are each formed by seven beta subunits. The catalytic chamber with the active sites is on the inside of the barrel.

Its subcellular location is the cytoplasm. It is found in the nucleus. The enzyme catalyses Cleavage of peptide bonds with very broad specificity.. Its function is as follows. The proteasome is a multicatalytic proteinase complex which is characterized by its ability to cleave peptides with Arg, Phe, Tyr, Leu, and Glu adjacent to the leaving group at neutral or slightly basic pH. The proteasome has an ATP-dependent proteolytic activity. This is Proteasome subunit beta type-6 (psmB6) from Dictyostelium discoideum (Social amoeba).